The chain runs to 69 residues: Rubredoxin-1 (69 aa).

The 56-residue stretch at 14-69 (QASWMCAECGYIYDPAEGNLETNIRPGMPFDKLPDDWSCPVCNHPKNQFTKFISQL) folds into the Rubredoxin-like domain. 4 residues coordinate Fe cation: Cys19, Cys22, Cys52, and Cys55.

This sequence belongs to the rubredoxin family. In terms of assembly, monomer. It depends on Fe(3+) as a cofactor.

In terms of biological role, serves as an electron acceptor for pyruvate ferredoxin oxidoreductase (PFOR). The protein is Rubredoxin-1 (rub1) of Chlorobaculum tepidum (strain ATCC 49652 / DSM 12025 / NBRC 103806 / TLS) (Chlorobium tepidum).